We begin with the raw amino-acid sequence, 217 residues long: MNQTLLSSFGTPFERVENALAALREGRGVMVLDDEDRENEGDMIFPAETMTVEQMALTIRHGSGIVCLCITDDRRKQLDLPMMVENNTSAYGTGFTVTIEAAEGVTTGVSAADRITTVRAAIADGAKPSDLNRPGHVFPLRAQAGGVLTRGGHTEATIDLMTLAGFKPAGVLCELTNDDGTMARAPECIEFANKHNMALVTIEDLVAYRQAHERKAS.

D-ribulose 5-phosphate-binding positions include 37 to 38, Asp-42, 150 to 154, and Glu-174; these read RE and RGGHT. Mg(2+) is bound at residue Glu-38. His-153 is a binding site for Mg(2+).

The protein belongs to the DHBP synthase family. As to quaternary structure, homodimer. Mg(2+) serves as cofactor. Mn(2+) is required as a cofactor.

The catalysed reaction is D-ribulose 5-phosphate = (2S)-2-hydroxy-3-oxobutyl phosphate + formate + H(+). The protein operates within cofactor biosynthesis; riboflavin biosynthesis; 2-hydroxy-3-oxobutyl phosphate from D-ribulose 5-phosphate: step 1/1. Its function is as follows. Catalyzes the conversion of D-ribulose 5-phosphate to formate and 3,4-dihydroxy-2-butanone 4-phosphate. The protein is 3,4-dihydroxy-2-butanone 4-phosphate synthase of Escherichia coli O127:H6 (strain E2348/69 / EPEC).